Consider the following 93-residue polypeptide: Small ribosomal subunit protein uS19 (93 aa).

It belongs to the universal ribosomal protein uS19 family.

Its function is as follows. Protein S19 forms a complex with S13 that binds strongly to the 16S ribosomal RNA. The sequence is that of Small ribosomal subunit protein uS19 from Frankia alni (strain DSM 45986 / CECT 9034 / ACN14a).